Reading from the N-terminus, the 824-residue chain is Fibroblast growth factor receptor 2 (824 aa).

Positions 1–21 are cleaved as a signal peptide; sequence MFSWSYLMGLVMVATATLSLA. Residues 22–374 are Extracellular-facing; that stretch reads RPSYNIAEDT…LDSSSSEYTE (353 aa). Residues 25–125 enclose the Ig-like C2-type 1 domain; sequence YNIAEDTTLE…ETRYFIVNIT (101 aa). The cysteines at positions 62 and 107 are disulfide-linked. Residues N83, N123, and N128 are each glycosylated (N-linked (GlcNAc...) asparagine). The disordered stretch occupies residues 125–152; sequence TDGNSSGDDEDDNDGSEDFTNDNNHKRA. Positions 131–144 are enriched in acidic residues; sequence GDDEDDNDGSEDFT. Ig-like C2-type domains lie at 153-246 and 254-356; these read PYWT…YHLD and PPIL…AWLT. The tract at residues 160-177 is heparin-binding; sequence KLEKKLHAVPAANTVKFR. C178 and C230 form a disulfide bridge. N227, N240, N264, N295, N316, and N329 each carry an N-linked (GlcNAc...) asparagine glycan. The cysteines at positions 277 and 340 are disulfide-linked. A helical transmembrane segment spans residues 375 to 395; that stretch reads IAIYCVGGFLIACMIGTIMMC. Residues 396-824 lie on the Cytoplasmic side of the membrane; sequence HMKGRGKKSD…PLKHEATQPA (429 aa). Position 463 is a phosphotyrosine; by autocatalysis (Y463). The region spanning 478–767 is the Protein kinase domain; the sequence is LTLGKPLGEG…LTQTTNEEYL (290 aa). Residues 484-492, K514, 562-564, and N568 each bind ATP; these read LGEGCFGQV and EYA. Position 583 is a phosphotyrosine; by autocatalysis (Y583). Catalysis depends on D623, which acts as the Proton acceptor. 3 positions are modified to phosphotyrosine; by autocatalysis: Y653, Y654, and Y766. The segment at 801 to 824 is disordered; it reads SMNLAFPNPNTQMAPLKHEATQPA.

The protein belongs to the protein kinase superfamily. Tyr protein kinase family. Fibroblast growth factor receptor subfamily. As to quaternary structure, monomer. Homodimer after ligand binding. Post-translationally, autophosphorylated. Binding of FGF family members together with heparan sulfate proteoglycan or heparin promotes receptor dimerization and autophosphorylation on tyrosine residues. Autophosphorylation occurs in trans between the two FGFR molecules present in the dimer. N-glycosylated in the endoplasmic reticulum. The N-glycan chains undergo further maturation to an Endo H-resistant form in the Golgi apparatus. In terms of processing, ubiquitinated. FGFR2 is rapidly ubiquitinated after autophosphorylation, leading to internalization and degradation. Subject to degradation both in lysosomes and by the proteasome.

The protein resides in the cell membrane. It localises to the golgi apparatus. Its subcellular location is the cytoplasmic vesicle. It catalyses the reaction L-tyrosyl-[protein] + ATP = O-phospho-L-tyrosyl-[protein] + ADP + H(+). Its activity is regulated as follows. Present in an inactive conformation in the absence of bound ligand. Ligand binding leads to dimerization and activation by autophosphorylation on tyrosine residues. In terms of biological role, tyrosine-protein kinase that acts as a cell-surface receptor for fibroblast growth factors and plays an essential role in the regulation of cell proliferation, differentiation, migration and apoptosis, and in the regulation of embryonic development. Required for normal embryonic patterning, limb bud development, lung morphogenesis, osteogenesis and skin development. Plays an essential role in the regulation of osteoblast differentiation, proliferation and apoptosis, and is required for normal skeleton development. Promotes cell proliferation in keratinocytes and immature osteoblasts, but promotes apoptosis in differentiated osteoblasts. Phosphorylates PLCG1, FRS2 and PAK4. Ligand binding leads to the activation of several signaling cascades. Activation of PLCG1 leads to the production of the cellular signaling molecules diacylglycerol and inositol 1,4,5-trisphosphate. Phosphorylation of FRS2 triggers recruitment of GRB2, GAB1, PIK3R1 and SOS1, and mediates activation of RAS, MAPK1/ERK2, MAPK3/ERK1 and the MAP kinase signaling pathway, as well as of the AKT1 signaling pathway. FGFR2 signaling is down-regulated by ubiquitination, internalization and degradation. Mutations that lead to constitutive kinase activation or impair normal FGFR2 maturation, internalization and degradation lead to aberrant signaling. Over-expressed FGFR2 promotes activation of STAT1. This Pleurodeles waltl (Iberian ribbed newt) protein is Fibroblast growth factor receptor 2 (FGFR2).